Consider the following 465-residue polypeptide: UDP-glycosyltransferase TURAN (465 aa).

The Cytoplasmic segment spans residues 1-75 (MGKRGRACVV…FIQYFPKILY (75 aa)). Residues 76-96 (PVTLLLKAFIQFTMLLWFLFV) traverse the membrane as a helical segment. Topologically, residues 97 to 465 (KVPAPDIFLV…TQVVSQIADS (369 aa)) are lumenal. The N-linked (GlcNAc...) asparagine glycan is linked to Asn238.

This sequence belongs to the glycosyltransferase group 1 family. Glycosyltransferase 33 subfamily.

Its subcellular location is the endoplasmic reticulum membrane. It functions in the pathway protein modification; protein glycosylation. Required for pollen tube (PT) growth and integrity by affecting the stability of the pollen-specific ANX1 and ANX2 proteins. Involved in protein N-glycosylation in the endoplasmic reticulum (ER), especially in the female gametophyte. Mediates PT reception in synergids through protein glycosylation. The protein is UDP-glycosyltransferase TURAN of Arabidopsis thaliana (Mouse-ear cress).